Consider the following 190-residue polypeptide: Nucleoside triphosphate pyrophosphatase (190 aa).

D69 functions as the Proton acceptor in the catalytic mechanism.

Belongs to the Maf family. The cofactor is a divalent metal cation.

It is found in the cytoplasm. It carries out the reaction a ribonucleoside 5'-triphosphate + H2O = a ribonucleoside 5'-phosphate + diphosphate + H(+). The enzyme catalyses a 2'-deoxyribonucleoside 5'-triphosphate + H2O = a 2'-deoxyribonucleoside 5'-phosphate + diphosphate + H(+). Functionally, nucleoside triphosphate pyrophosphatase. May have a dual role in cell division arrest and in preventing the incorporation of modified nucleotides into cellular nucleic acids. This chain is Nucleoside triphosphate pyrophosphatase, found in Helicobacter pylori (strain G27).